The following is a 156-amino-acid chain: ATP synthase subunit b (156 aa).

A helical transmembrane segment spans residues 7–29; sequence LLGQAISFGMFVWFCMKYVWPPI.

The protein belongs to the ATPase B chain family. In terms of assembly, F-type ATPases have 2 components, F(1) - the catalytic core - and F(0) - the membrane proton channel. F(1) has five subunits: alpha(3), beta(3), gamma(1), delta(1), epsilon(1). F(0) has three main subunits: a(1), b(2) and c(10-14). The alpha and beta chains form an alternating ring which encloses part of the gamma chain. F(1) is attached to F(0) by a central stalk formed by the gamma and epsilon chains, while a peripheral stalk is formed by the delta and b chains.

It localises to the cell inner membrane. Its function is as follows. F(1)F(0) ATP synthase produces ATP from ADP in the presence of a proton or sodium gradient. F-type ATPases consist of two structural domains, F(1) containing the extramembraneous catalytic core and F(0) containing the membrane proton channel, linked together by a central stalk and a peripheral stalk. During catalysis, ATP synthesis in the catalytic domain of F(1) is coupled via a rotary mechanism of the central stalk subunits to proton translocation. In terms of biological role, component of the F(0) channel, it forms part of the peripheral stalk, linking F(1) to F(0). The sequence is that of ATP synthase subunit b from Vibrio cholerae serotype O1 (strain ATCC 39541 / Classical Ogawa 395 / O395).